A 208-amino-acid polypeptide reads, in one-letter code: NAD(P)H-quinone oxidoreductase subunit I (208 aa).

2 consecutive 4Fe-4S ferredoxin-type domains span residues 55-84 (GRIH…VDWV) and 95-124 (RNYS…MTEE). 8 residues coordinate [4Fe-4S] cluster: C64, C67, C70, C74, C104, C107, C110, and C114.

The protein belongs to the complex I 23 kDa subunit family. NDH-1 is composed of at least 11 different subunits. The cofactor is [4Fe-4S] cluster.

It localises to the cellular thylakoid membrane. The enzyme catalyses a plastoquinone + NADH + (n+1) H(+)(in) = a plastoquinol + NAD(+) + n H(+)(out). The catalysed reaction is a plastoquinone + NADPH + (n+1) H(+)(in) = a plastoquinol + NADP(+) + n H(+)(out). Functionally, NDH-1 shuttles electrons from an unknown electron donor, via FMN and iron-sulfur (Fe-S) centers, to quinones in the respiratory and/or the photosynthetic chain. The immediate electron acceptor for the enzyme in this species is believed to be plastoquinone. Couples the redox reaction to proton translocation, and thus conserves the redox energy in a proton gradient. This Prochlorococcus marinus (strain MIT 9215) protein is NAD(P)H-quinone oxidoreductase subunit I.